Reading from the N-terminus, the 117-residue chain is Immunoglobulin heavy variable 1-2 (117 aa).

Residues 1–19 (MDWTWRILFLVAAATGAHS) form the signal peptide. A Pyrrolidone carboxylic acid modification is found at Gln-20. The segment at 20-44 (QVQLVQSGAEVKKPGASVKVSCKAS) is framework-1. Residues 20–117 (QVQLVQSGAE…DDTAVYYCAR (98 aa)) form the Ig-like domain. An intrachain disulfide couples Cys-41 to Cys-115. Residues 45 to 52 (GYTFTGYY) form a complementarity-determining-1 region. The framework-2 stretch occupies residues 53 to 69 (MHWVRQAPGQGLEWMGW). Residues 70–77 (INPNSGGT) are complementarity-determining-2. Residues 78–115 (NYAQKFQGWVTMTRDTSISTAYMELSRLRSDDTAVYYC) form a framework-3 region. The segment at 116 to 117 (AR) is complementarity-determining-3.

Immunoglobulins are composed of two identical heavy chains and two identical light chains; disulfide-linked.

The protein localises to the secreted. It is found in the cell membrane. V region of the variable domain of immunoglobulin heavy chains that participates in the antigen recognition. Immunoglobulins, also known as antibodies, are membrane-bound or secreted glycoproteins produced by B lymphocytes. In the recognition phase of humoral immunity, the membrane-bound immunoglobulins serve as receptors which, upon binding of a specific antigen, trigger the clonal expansion and differentiation of B lymphocytes into immunoglobulins-secreting plasma cells. Secreted immunoglobulins mediate the effector phase of humoral immunity, which results in the elimination of bound antigens. The antigen binding site is formed by the variable domain of one heavy chain, together with that of its associated light chain. Thus, each immunoglobulin has two antigen binding sites with remarkable affinity for a particular antigen. The variable domains are assembled by a process called V-(D)-J rearrangement and can then be subjected to somatic hypermutations which, after exposure to antigen and selection, allow affinity maturation for a particular antigen. This Homo sapiens (Human) protein is Immunoglobulin heavy variable 1-2.